A 165-amino-acid polypeptide reads, in one-letter code: Immunity protein YokJ (165 aa).

Probably interacts with cognate toxin YokI but not with other non-cognate toxins. The interaction inhibits the toxic activity of YokI.

It is found in the cytoplasm. Its function is as follows. Immunity component of one of 6 LXG toxin-immunity modules in this strain. They promote kin selection, mediate competition in biofilms, and drive spatial segregation of different strains, indicating that LXG toxins may help avoid warfare between strains in biofilms. Mediates intercellular competition during biofilm formation; disruption of the operon disadvantages the bacteria, but overexpression of the cognate immunity protein restores growth in competition with wild-type. In situ neutralizes the toxic effect of cognate toxin YokI. Neutralizes the ability to inhibit growth of cognate toxin YokI upon expression in E.coli. Does not have immunity protein activity on other LXG toxins. This is Immunity protein YokJ (yokJ) from Bacillus subtilis (strain 168).